The chain runs to 646 residues: MRARLISYNGTTMYDLLKTIDDPADLRRLDRRQLQPLADELRAFVLDSVSKTGGHLSSNLGTVELTIALHYVFNTPNDRIVWDVGHQTYPHKILTGRRDQMHSLRQYDGISGFPRRSESEYDTFGTAHSSTSISAALGMAIGSQLNGDDRFSIAVIGDGAMTAGMAFEAMNNAGVSEDAKLLVILNDNDMSISPPVGALNRHLARLMSGRFYAAARAGVERVLSVAPPVLELARKLEEHAKGMVVPATLFEEFGFNYIGPIDGHDLDSLIPTLQNIRELRGPQFLHVVTKKGQGYKLAEADPVLYHGPGKFNPAEGIKPSTTPAKKTYTQVFGEWLCDEAERDTRVVGITPAMREGSGMVEFEKRFKDRYYDVGIAEQHAVTFAGGLATEGLKPVVAIYSTFLQRAYDQLIHDVALQNLPVVFAIDRAGLVGADGATHAGAYDLAFMRCIPNMTIMAASDENECRQMLHTALQQPNPTAVRYPRGAGTGVATVKEFTEIPLGKGEVRRRTSQPEGKRVAILAFGTMVAPSLAAAEELDATVANMRFVKPVDAALVRELAETHDYLVTVEEGCVMGGAGSACVEALMESGVIRPVLQLGLPDQFVDHGDHAKLLAQCGLDGAGIAKSIRERFLSPAADVAGHAKRVA.

Thiamine diphosphate contacts are provided by residues His86 and 127 to 129; that span reads AHS. A Mg(2+)-binding site is contributed by Asp158. Residues 159-160, Asn188, Tyr295, and Glu377 contribute to the thiamine diphosphate site; that span reads GA. Asn188 lines the Mg(2+) pocket.

It belongs to the transketolase family. DXPS subfamily. Homodimer. Requires Mg(2+) as cofactor. It depends on thiamine diphosphate as a cofactor.

The catalysed reaction is D-glyceraldehyde 3-phosphate + pyruvate + H(+) = 1-deoxy-D-xylulose 5-phosphate + CO2. The protein operates within metabolic intermediate biosynthesis; 1-deoxy-D-xylulose 5-phosphate biosynthesis; 1-deoxy-D-xylulose 5-phosphate from D-glyceraldehyde 3-phosphate and pyruvate: step 1/1. Catalyzes the acyloin condensation reaction between C atoms 2 and 3 of pyruvate and glyceraldehyde 3-phosphate to yield 1-deoxy-D-xylulose-5-phosphate (DXP). The polypeptide is 1-deoxy-D-xylulose-5-phosphate synthase (Burkholderia cenocepacia (strain HI2424)).